The chain runs to 105 residues: Thioredoxin (105 aa).

Residues 1-105 (MANNVTDSSF…SLLDWINKSI (105 aa)) enclose the Thioredoxin domain. Cys-30 and Cys-33 are joined by a disulfide.

Belongs to the thioredoxin family.

Component of the thioredoxin-thioredoxin reductase system. Participates in various redox reactions through the reversible oxidation of its active center dithiol to a disulfide and catalyzes dithiol-disulfide exchange reactions. In Rickettsia felis (strain ATCC VR-1525 / URRWXCal2) (Rickettsia azadi), this protein is Thioredoxin (trxA).